Reading from the N-terminus, the 169-residue chain is Peptide deformylase (169 aa).

2 residues coordinate Fe cation: Cys-91 and His-133. Glu-134 is an active-site residue. His-137 is a binding site for Fe cation.

This sequence belongs to the polypeptide deformylase family. It depends on Fe(2+) as a cofactor.

The catalysed reaction is N-terminal N-formyl-L-methionyl-[peptide] + H2O = N-terminal L-methionyl-[peptide] + formate. Removes the formyl group from the N-terminal Met of newly synthesized proteins. Requires at least a dipeptide for an efficient rate of reaction. N-terminal L-methionine is a prerequisite for activity but the enzyme has broad specificity at other positions. The polypeptide is Peptide deformylase (Enterobacter sp. (strain 638)).